Reading from the N-terminus, the 599-residue chain is Elongation factor 4 (599 aa).

Residues 5 to 187 (SHIRNFSIIA…ALVNGIPAPV (183 aa)) enclose the tr-type G domain. GTP contacts are provided by residues 17-22 (DHGKST) and 134-137 (NKMD).

Belongs to the TRAFAC class translation factor GTPase superfamily. Classic translation factor GTPase family. LepA subfamily.

It is found in the cell inner membrane. The enzyme catalyses GTP + H2O = GDP + phosphate + H(+). Required for accurate and efficient protein synthesis under certain stress conditions. May act as a fidelity factor of the translation reaction, by catalyzing a one-codon backward translocation of tRNAs on improperly translocated ribosomes. Back-translocation proceeds from a post-translocation (POST) complex to a pre-translocation (PRE) complex, thus giving elongation factor G a second chance to translocate the tRNAs correctly. Binds to ribosomes in a GTP-dependent manner. The sequence is that of Elongation factor 4 from Teredinibacter turnerae (strain ATCC 39867 / T7901).